A 128-amino-acid polypeptide reads, in one-letter code: Small ribosomal subunit protein uS11 (128 aa).

This sequence belongs to the universal ribosomal protein uS11 family. In terms of assembly, part of the 30S ribosomal subunit. Interacts with proteins S7 and S18. Binds to IF-3.

Located on the platform of the 30S subunit, it bridges several disparate RNA helices of the 16S rRNA. Forms part of the Shine-Dalgarno cleft in the 70S ribosome. This Wolbachia pipientis wMel protein is Small ribosomal subunit protein uS11.